A 417-amino-acid chain; its full sequence is UDP-N-acetylglucosamine 1-carboxyvinyltransferase (417 aa).

22 to 23 (KN) provides a ligand contact to phosphoenolpyruvate. Arg-92 contacts UDP-N-acetyl-alpha-D-glucosamine. Catalysis depends on Cys-116, which acts as the Proton donor. A 2-(S-cysteinyl)pyruvic acid O-phosphothioketal modification is found at Cys-116. Residues Asp-304 and Ile-326 each coordinate UDP-N-acetyl-alpha-D-glucosamine.

The protein belongs to the EPSP synthase family. MurA subfamily.

The protein resides in the cytoplasm. It carries out the reaction phosphoenolpyruvate + UDP-N-acetyl-alpha-D-glucosamine = UDP-N-acetyl-3-O-(1-carboxyvinyl)-alpha-D-glucosamine + phosphate. Its pathway is cell wall biogenesis; peptidoglycan biosynthesis. Cell wall formation. Adds enolpyruvyl to UDP-N-acetylglucosamine. The polypeptide is UDP-N-acetylglucosamine 1-carboxyvinyltransferase (Geobacter sulfurreducens (strain ATCC 51573 / DSM 12127 / PCA)).